A 195-amino-acid chain; its full sequence is Large ribosomal subunit protein mL58 (195 aa).

A mitochondrion-targeting transit peptide spans M1 to W18.

This sequence belongs to the mitochondrion-specific ribosomal protein mL58 family. As to quaternary structure, component of the mitochondrial large ribosomal subunit (mt-LSU). Mature yeast 74S mitochondrial ribosomes consist of a small (37S) and a large (54S) subunit. The 37S small subunit contains a 15S ribosomal RNA (15S mt-rRNA) and 34 different proteins. The 54S large subunit contains a 21S rRNA (21S mt-rRNA) and 46 different proteins.

It is found in the mitochondrion. Component of the mitochondrial ribosome (mitoribosome), a dedicated translation machinery responsible for the synthesis of mitochondrial genome-encoded proteins, including at least some of the essential transmembrane subunits of the mitochondrial respiratory chain. The mitoribosomes are attached to the mitochondrial inner membrane and translation products are cotranslationally integrated into the membrane. This chain is Large ribosomal subunit protein mL58 (MRPL20), found in Saccharomyces cerevisiae (strain ATCC 204508 / S288c) (Baker's yeast).